Consider the following 398-residue polypeptide: Probable beta-1,3-galactosyltransferase 5 (398 aa).

A helical; Signal-anchor for type II membrane protein membrane pass occupies residues 11–31; it reads LTMTWVPLLCISCFFLGAIFT. Asn110, Asn115, and Asn206 each carry an N-linked (GlcNAc...) asparagine glycan.

This sequence belongs to the glycosyltransferase 31 family. Mn(2+) serves as cofactor.

It localises to the golgi apparatus membrane. Its pathway is protein modification; protein glycosylation. Functionally, beta-1,3-galactosyltransferase that transfers galactose from UDP-galactose to substrates with a terminal glycosyl residue. The sequence is that of Probable beta-1,3-galactosyltransferase 5 (B3GALT5) from Arabidopsis thaliana (Mouse-ear cress).